A 134-amino-acid polypeptide reads, in one-letter code: Small ribosomal subunit protein uS8 (134 aa).

It belongs to the universal ribosomal protein uS8 family. In terms of assembly, part of the 30S ribosomal subunit. Contacts proteins S5 and S12.

One of the primary rRNA binding proteins, it binds directly to 16S rRNA central domain where it helps coordinate assembly of the platform of the 30S subunit. This chain is Small ribosomal subunit protein uS8, found in Thermotoga neapolitana (strain ATCC 49049 / DSM 4359 / NBRC 107923 / NS-E).